The chain runs to 372 residues: 4-hydroxy-3-methylbut-2-en-1-yl diphosphate synthase (flavodoxin) (372 aa).

[4Fe-4S] cluster is bound by residues Cys-270, Cys-273, Cys-305, and Glu-312.

Belongs to the IspG family. It depends on [4Fe-4S] cluster as a cofactor.

The enzyme catalyses (2E)-4-hydroxy-3-methylbut-2-enyl diphosphate + oxidized [flavodoxin] + H2O + 2 H(+) = 2-C-methyl-D-erythritol 2,4-cyclic diphosphate + reduced [flavodoxin]. It participates in isoprenoid biosynthesis; isopentenyl diphosphate biosynthesis via DXP pathway; isopentenyl diphosphate from 1-deoxy-D-xylulose 5-phosphate: step 5/6. Functionally, converts 2C-methyl-D-erythritol 2,4-cyclodiphosphate (ME-2,4cPP) into 1-hydroxy-2-methyl-2-(E)-butenyl 4-diphosphate. In Escherichia coli (strain SMS-3-5 / SECEC), this protein is 4-hydroxy-3-methylbut-2-en-1-yl diphosphate synthase (flavodoxin).